The chain runs to 506 residues: Glutamate--tRNA ligase (506 aa).

A 'HIGH' region motif is present at residues 29–39 (PSPTGTPHVGL). The short motif at 273 to 277 (KLSKR) is the 'KMSKS' region element. ATP is bound at residue lysine 276.

It belongs to the class-I aminoacyl-tRNA synthetase family. Glutamate--tRNA ligase type 1 subfamily. In terms of assembly, monomer.

It is found in the cytoplasm. The catalysed reaction is tRNA(Glu) + L-glutamate + ATP = L-glutamyl-tRNA(Glu) + AMP + diphosphate. Functionally, catalyzes the attachment of glutamate to tRNA(Glu) in a two-step reaction: glutamate is first activated by ATP to form Glu-AMP and then transferred to the acceptor end of tRNA(Glu). This Paenarthrobacter aurescens (strain TC1) protein is Glutamate--tRNA ligase.